We begin with the raw amino-acid sequence, 142 residues long: Transcriptional regulator MraZ (142 aa).

SpoVT-AbrB domains are found at residues 5 to 51 (ASAL…PRPE) and 77 to 120 (AMDV…DAQT).

The protein belongs to the MraZ family. In terms of assembly, forms oligomers.

It is found in the cytoplasm. The protein localises to the nucleoid. This Burkholderia mallei (strain NCTC 10247) protein is Transcriptional regulator MraZ.